Reading from the N-terminus, the 679-residue chain is Stress-70 protein, mitochondrial (679 aa).

The N-terminal 46 residues, 1 to 46 (MISASRAAAARLVGTAASRSPAAARPQDGWNGLSHEAFRFVSRRDY), are a transit peptide targeting the mitochondrion. The interaction with NFS1 stretch occupies residues 1 to 432 (MISASRAAAA…IQGGVLAGDV (432 aa)). Thr63 and Asn64 together coordinate ADP. Residues 63–431 (TNSCVAVMEG…AIQGGVLAGD (369 aa)) are nucleotide-binding domain (NBD). An N6-acetyllysine modification is found at Lys76. Residue Thr87 is modified to Phosphothreonine. Residues Lys135 and Lys138 each carry the N6-acetyllysine; alternate modification. N6-succinyllysine; alternate is present on residues Lys135 and Lys138. Residue Lys143 is modified to N6-acetyllysine. Residue Lys206 is modified to N6-acetyllysine; alternate. Position 206 is an N6-succinyllysine; alternate (Lys206). Residue Lys206 is modified to N6-malonyllysine; alternate. N6-acetyllysine occurs at positions 234 and 288. Residue Lys300 is modified to N6-acetyllysine; alternate. Lys300 is modified (N6-succinyllysine; alternate). ADP contacts are provided by Glu313, Lys316, and Ser320. Lys360 is modified (N6-acetyllysine; alternate). N6-succinyllysine; alternate is present on Lys360. Residue Lys368 is modified to N6-succinyllysine. Gly388 and Arg391 together coordinate ADP. Residue Lys394 is modified to N6-succinyllysine. Ser408 is subject to Phosphoserine. Residues 432-441 (VTDVLLLDVT) form an interdomain linker region. Positions 432–679 (VTDVLLLDVT…QKEDQKEEKQ (248 aa)) are interaction with FXN and ISCU. The interval 442 to 679 (PLSLGIETLG…QKEDQKEEKQ (238 aa)) is substrate-binding domain (SBD). Arg513 bears the Omega-N-methylarginine mark. Residues Lys567 and Lys600 each carry the N6-acetyllysine; alternate modification. An N6-succinyllysine; alternate mark is found at Lys567 and Lys600. Residue Lys610 is modified to N6-succinyllysine. Residue Lys612 is modified to N6-acetyllysine. At Lys646 the chain carries N6-acetyllysine; alternate. N6-succinyllysine; alternate is present on Lys646. Residues 656–679 (ASEREGSGSSGTGEQKEDQKEEKQ) form a disordered region. A compositionally biased stretch (basic and acidic residues) spans 669–679 (EQKEDQKEEKQ).

The protein belongs to the heat shock protein 70 family. Interacts strongly with the intermediate form of FXN and weakly with its mature form. Interacts with HSCB. Associates with the mitochondrial contact site and cristae organizing system (MICOS) complex, composed of at least MICOS10/MIC10, CHCHD3/MIC19, CHCHD6/MIC25, APOOL/MIC27, IMMT/MIC60, APOO/MIC23/MIC26 and QIL1/MIC13. This complex was also known under the names MINOS or MitOS complex. The MICOS complex associates with mitochondrial outer membrane proteins SAMM50, MTX1, MTX2 and DNAJC11, mitochondrial inner membrane protein TMEM11 and with HSPA9. Interacts with DNLZ, the interaction is required to prevent self-aggregation. Interacts with TESPA1. Interacts with PDPN. Interacts with NFU1, NFS1 and ISCU. Interacts with TP53; the interaction promotes TP53 degradation. Interacts (via SBD domain) with UBXN2A; the interaction with UBXN2A inhibits HSPA9/MOT-2 interaction with and degradation of TP53, thereby promotes TP53 translocation to the nucleus. Interacts with ITPR1 AND VDAC1; this interaction couples ITPR1 to VDAC1. Component of the TIM23 mitochondrial inner membrane pre-sequence translocase complex.

It is found in the mitochondrion. It localises to the nucleus. Its subcellular location is the nucleolus. The protein resides in the cytoplasm. The protein localises to the mitochondrion matrix. It carries out the reaction ATP + H2O = ADP + phosphate + H(+). The chaperone activity is regulated by ATP-induced allosteric coupling of the nucleotide-binding (NBD) and substrate-binding (SBD) domains. ATP binding in the NBD leads to a conformational change in the NBD, which is transferred through the interdomain linker (IDL) to the substrate-binding domain (SBD). This elicits a reduced substrate affinity and a faster substrate exchange rate. Upon hydrolysis of ATP to ADP, the protein undergoes a conformational change that increases its affinity for substrate proteins. It cycles through repeated phases of ATP hydrolysis and nucleotide exchange, facilitating repeated cycles of substrate binding and release. Functions in collaboration with co-chaperones. Functions with the co-chaperone, DNLZ, to maintain solubility and regulate ATP hydrolysis. Nucleotide exchange factors, GRPEL1 and GRPEL2, accelerate nucleotide exchange. Mitochondrial chaperone that plays a key role in mitochondrial protein import, folding, and assembly. Plays an essential role in the protein quality control system, the correct folding of proteins, the re-folding of misfolded proteins, and the targeting of proteins for subsequent degradation. These processes are achieved through cycles of ATP binding, ATP hydrolysis, and ADP release, mediated by co-chaperones. In mitochondria, it associates with the TIM (translocase of the inner membrane) protein complex to assist in the import and folding of mitochondrial proteins. Plays an important role in mitochondrial iron-sulfur cluster (ISC) biogenesis. Interacts with and stabilizes ISC cluster assembly proteins FXN, NFU1, NFS1 and ISCU. Regulates erythropoiesis via stabilization of ISC assembly. Regulates mitochondrial calcium-dependent apoptosis by coupling two calcium channels, ITPR1 and VDAC1, at the mitochondria-associated endoplasmic reticulum (ER) membrane to facilitate calcium transport from the ER lumen to the mitochondria intermembrane space, providing calcium for the downstream calcium channel MCU, which releases it into the mitochondrial matrix. Although primarily located in the mitochondria, it is also found in other cellular compartments. In the cytosol, it associates with proteins involved in signaling, apoptosis, or senescence. It may play a role in cell cycle regulation via its interaction with and promotion of degradation of TP53. May play a role in the control of cell proliferation and cellular aging. Protects against reactive oxygen species (ROS). Extracellular HSPA9 plays a cytoprotective role by preventing cell lysis following immune attack by the membrane attack complex by disrupting formation of the complex. This Mus musculus (Mouse) protein is Stress-70 protein, mitochondrial.